The chain runs to 253 residues: tRNA-cytidine(32) 2-sulfurtransferase 2 (253 aa).

The short motif at Ser33–Ser38 is the PP-loop motif element. Residues Cys108, Cys111, and Cys199 each contribute to the [4Fe-4S] cluster site.

It belongs to the TtcA family. In terms of assembly, homodimer. The cofactor is Mg(2+). [4Fe-4S] cluster serves as cofactor.

The protein localises to the cytoplasm. It catalyses the reaction cytidine(32) in tRNA + S-sulfanyl-L-cysteinyl-[cysteine desulfurase] + AH2 + ATP = 2-thiocytidine(32) in tRNA + L-cysteinyl-[cysteine desulfurase] + A + AMP + diphosphate + H(+). It functions in the pathway tRNA modification. Catalyzes the ATP-dependent 2-thiolation of cytidine in position 32 of tRNA, to form 2-thiocytidine (s(2)C32). The sulfur atoms are provided by the cysteine/cysteine desulfurase (IscS) system. The sequence is that of tRNA-cytidine(32) 2-sulfurtransferase 2 from Francisella tularensis subsp. novicida (strain U112).